Consider the following 335-residue polypeptide: Beta-ketoacyl-[acyl-carrier-protein] synthase III 1 (335 aa).

Catalysis depends on residues Cys116 and His256. An ACP-binding region spans residues 257-261 (QANQR). The active site involves Asn286.

This sequence belongs to the thiolase-like superfamily. FabH family. Homodimer.

The protein localises to the cytoplasm. It catalyses the reaction malonyl-[ACP] + acetyl-CoA + H(+) = 3-oxobutanoyl-[ACP] + CO2 + CoA. The protein operates within lipid metabolism; fatty acid biosynthesis. In terms of biological role, catalyzes the condensation reaction of fatty acid synthesis by the addition to an acyl acceptor of two carbons from malonyl-ACP. Catalyzes the first condensation reaction which initiates fatty acid synthesis and may therefore play a role in governing the total rate of fatty acid production. Possesses both acetoacetyl-ACP synthase and acetyl transacylase activities. Its substrate specificity determines the biosynthesis of branched-chain and/or straight-chain of fatty acids. This chain is Beta-ketoacyl-[acyl-carrier-protein] synthase III 1, found in Bacteroides thetaiotaomicron (strain ATCC 29148 / DSM 2079 / JCM 5827 / CCUG 10774 / NCTC 10582 / VPI-5482 / E50).